The chain runs to 91 residues: Putative regulatory protein DSY2730 (91 aa).

It belongs to the RemA family.

The chain is Putative regulatory protein DSY2730 from Desulfitobacterium hafniense (strain Y51).